Here is a 176-residue protein sequence, read N- to C-terminus: 3-hydroxydecanoyl-[acyl-carrier-protein] dehydratase (176 aa).

The active site involves H75.

The protein belongs to the thioester dehydratase family. FabA subfamily. As to quaternary structure, homodimer.

It is found in the cytoplasm. It catalyses the reaction a (3R)-hydroxyacyl-[ACP] = a (2E)-enoyl-[ACP] + H2O. The enzyme catalyses (3R)-hydroxydecanoyl-[ACP] = (2E)-decenoyl-[ACP] + H2O. It carries out the reaction (2E)-decenoyl-[ACP] = (3Z)-decenoyl-[ACP]. Its pathway is lipid metabolism; fatty acid biosynthesis. In terms of biological role, necessary for the introduction of cis unsaturation into fatty acids. Catalyzes the dehydration of (3R)-3-hydroxydecanoyl-ACP to E-(2)-decenoyl-ACP and then its isomerization to Z-(3)-decenoyl-ACP. Can catalyze the dehydratase reaction for beta-hydroxyacyl-ACPs with saturated chain lengths up to 16:0, being most active on intermediate chain length. The chain is 3-hydroxydecanoyl-[acyl-carrier-protein] dehydratase from Actinobacillus pleuropneumoniae serotype 5b (strain L20).